Consider the following 765-residue polypeptide: 5-methyltetrahydropteroyltriglutamate--homocysteine methyltransferase (765 aa).

5-methyltetrahydropteroyltri-L-glutamate-binding positions include Arg18–Lys21 and Lys114. L-homocysteine-binding positions include Ile437–Ser439 and Glu490. L-methionine contacts are provided by residues Ile437–Ser439 and Glu490. A 5-methyltetrahydropteroyltri-L-glutamate-binding site is contributed by Trp567. Asp605 contributes to the L-homocysteine binding site. Asp605 is an L-methionine binding site. Glu611 contributes to the 5-methyltetrahydropteroyltri-L-glutamate binding site. Residues His647, Cys649, and Glu671 each coordinate Zn(2+). The active-site Proton donor is His700. Cys732 contributes to the Zn(2+) binding site.

This sequence belongs to the vitamin-B12 independent methionine synthase family. It depends on Zn(2+) as a cofactor.

The catalysed reaction is 5-methyltetrahydropteroyltri-L-glutamate + L-homocysteine = tetrahydropteroyltri-L-glutamate + L-methionine. It functions in the pathway amino-acid biosynthesis; L-methionine biosynthesis via de novo pathway; L-methionine from L-homocysteine (MetE route): step 1/1. Functionally, catalyzes the transfer of a methyl group from 5-methyltetrahydrofolate to homocysteine resulting in methionine formation. This Listeria monocytogenes serotype 4b (strain F2365) protein is 5-methyltetrahydropteroyltriglutamate--homocysteine methyltransferase.